The chain runs to 187 residues: UPF0301 protein YqgE (187 aa).

Belongs to the UPF0301 (AlgH) family.

The protein is UPF0301 protein YqgE of Salmonella paratyphi A (strain ATCC 9150 / SARB42).